The chain runs to 454 residues: Zinc finger protein 474 (454 aa).

A disordered region spans residues 48 to 85 (RGEKIKTNPRKNRPGTVILSKQSSRRIMSGSQPRPPVI). The span at 66-79 (LSKQSSRRIMSGSQ) shows a compositional bias: polar residues. The segment at 91 to 120 (GFRVCYICGREFGSQSLGIHEPQCLEKWRV) adopts a C2HC/C3H-type 1 zinc-finger fold. Cys-95, Cys-98, His-110, and Cys-114 together coordinate Zn(2+). The segment at 125-146 (LPKHLRRPEPSKPPPFSGSGSY) is disordered. 5 C2HC/C3H-type zinc fingers span residues 162-191 (QLLP…KVEG), 218-247 (RTVI…KWKV), 281-310 (QLVS…QPSG), 352-381 (PTIV…KWHN), and 425-454 (QLVP…KVAK). The Zn(2+) site is built by Cys-166, Cys-169, His-181, Cys-185, Cys-222, Cys-225, His-237, and Cys-241. Residues 256–282 (FRQPLPQKPQPLLTGQPKHAGPRQGQL) form a disordered region. Zn(2+) is bound by residues Cys-285, Cys-288, His-300, Cys-304, Cys-356, Cys-359, His-371, Cys-375, Cys-429, Cys-432, His-444, and Cys-448. The tract at residues 299–345 (VHQRSCKAQPSGPKVQDLTLGSRGGLKESTNPKPQRNMAAPPVTDKP) is disordered.

The cofactor is Zn(2+).

The sequence is that of Zinc finger protein 474 (ZNF474) from Bos taurus (Bovine).